A 294-amino-acid chain; its full sequence is Sulfotransferase 1E1 (294 aa).

Position 47–52 (47–52 (KSGTTW)) interacts with 3'-phosphoadenylyl sulfate. Residue 105-107 (KTH) participates in substrate binding. The active-site Proton acceptor is the His107. Residues Arg129, Ser137, Tyr192, 226 to 231 (TSFQEM), and 256 to 258 (RKG) each bind 3'-phosphoadenylyl sulfate.

Belongs to the sulfotransferase 1 family. In terms of assembly, homodimer. As to expression, liver, intestine and at lower level in the kidney.

Its subcellular location is the cytoplasm. The protein resides in the cytosol. The catalysed reaction is estrone + 3'-phosphoadenylyl sulfate = estrone 3-sulfate + adenosine 3',5'-bisphosphate + H(+). The enzyme catalyses (24S)-hydroxycholesterol + 3'-phosphoadenylyl sulfate = (24S)-hydroxycholesterol 3-sulfate + adenosine 3',5'-bisphosphate + H(+). It carries out the reaction 17beta-estradiol + 3'-phosphoadenylyl sulfate = 17beta-estradiol 3-sulfate + adenosine 3',5'-bisphosphate + H(+). It catalyses the reaction 3beta-hydroxyandrost-5-en-17-one + 3'-phosphoadenylyl sulfate = dehydroepiandrosterone 3-sulfate + adenosine 3',5'-bisphosphate + H(+). The catalysed reaction is 4-ethylphenol + 3'-phosphoadenylyl sulfate = 4-ethylphenyl sulfate + adenosine 3',5'-bisphosphate + H(+). Its activity is regulated as follows. Inhibited by estradiol. Functionally, sulfotransferase that utilizes 3'-phospho-5'-adenylyl sulfate (PAPS) as sulfonate donor to catalyze the sulfate conjugation of estradiol and estrone. Is a key enzyme in estrogen homeostasis, the sulfation of estrogens leads to their inactivation. Also sulfates dehydroepiandrosterone (DHEA), pregnenolone, (24S)-hydroxycholesterol and xenobiotic compounds like ethinylestradiol, equalenin, diethyl stilbesterol and 1-naphthol at significantly lower efficiency. Does not sulfonate cortisol, testosterone and dopamine. May play a role in gut microbiota-host metabolic interaction. O-sulfonates 4-ethylphenol (4-EP), a dietary tyrosine-derived metabolite produced by gut bacteria. The product 4-EPS crosses the blood-brain barrier and may negatively regulate oligodendrocyte maturation and myelination, affecting the functional connectivity of different brain regions associated with the limbic system. This chain is Sulfotransferase 1E1 (SULT1E1), found in Homo sapiens (Human).